Here is a 205-residue protein sequence, read N- to C-terminus: UPF0111 protein YkaA (205 aa).

This sequence belongs to the UPF0111 family.

The polypeptide is UPF0111 protein YkaA (ykaA) (Bacillus subtilis (strain 168)).